A 101-amino-acid chain; its full sequence is Small ribosomal subunit protein uS14A (101 aa).

The interval 31–67 (LRRPSSTEAERLAAQRELRRQPRDASPTRVRNRDQID) is disordered. Residues 38–53 (EAERLAAQRELRRQPR) are compositionally biased toward basic and acidic residues.

The protein belongs to the universal ribosomal protein uS14 family. As to quaternary structure, part of the 30S ribosomal subunit. Contacts proteins S3 and S10.

In terms of biological role, binds 16S rRNA, required for the assembly of 30S particles and may also be responsible for determining the conformation of the 16S rRNA at the A site. This Streptomyces coelicolor (strain ATCC BAA-471 / A3(2) / M145) protein is Small ribosomal subunit protein uS14A.